Here is a 254-residue protein sequence, read N- to C-terminus: Glycerol operon regulatory protein (254 aa).

The region spanning 5–67 is the HTH iclR-type domain; sequence IQSLERAAAM…DASGRYQLGA (63 aa). Positions 27–46 form a DNA-binding region, H-T-H motif; sequence LSDIASSLGLAKGTAHGILR. The region spanning 82–251 is the IclR-ED domain; it reads LRARALVWTD…ARAVSRDLGA (170 aa).

May be an activator protein for the gylABX operon. This Streptomyces coelicolor (strain ATCC BAA-471 / A3(2) / M145) protein is Glycerol operon regulatory protein (gylR).